We begin with the raw amino-acid sequence, 213 residues long: ATP phosphoribosyltransferase (213 aa).

This sequence belongs to the ATP phosphoribosyltransferase family. Short subfamily. Heteromultimer composed of HisG and HisZ subunits.

It is found in the cytoplasm. It catalyses the reaction 1-(5-phospho-beta-D-ribosyl)-ATP + diphosphate = 5-phospho-alpha-D-ribose 1-diphosphate + ATP. The protein operates within amino-acid biosynthesis; L-histidine biosynthesis; L-histidine from 5-phospho-alpha-D-ribose 1-diphosphate: step 1/9. Catalyzes the condensation of ATP and 5-phosphoribose 1-diphosphate to form N'-(5'-phosphoribosyl)-ATP (PR-ATP). Has a crucial role in the pathway because the rate of histidine biosynthesis seems to be controlled primarily by regulation of HisG enzymatic activity. This chain is ATP phosphoribosyltransferase, found in Saccharophagus degradans (strain 2-40 / ATCC 43961 / DSM 17024).